The sequence spans 555 residues: Glutamate--tRNA ligase (555 aa).

Positions 100 to 110 match the 'HIGH' region motif; sequence PNPSGPLHIGH.

Belongs to the class-I aminoacyl-tRNA synthetase family. Glutamate--tRNA ligase type 2 subfamily.

The protein resides in the cytoplasm. It catalyses the reaction tRNA(Glu) + L-glutamate + ATP = L-glutamyl-tRNA(Glu) + AMP + diphosphate. Its function is as follows. Catalyzes the attachment of glutamate to tRNA(Glu) in a two-step reaction: glutamate is first activated by ATP to form Glu-AMP and then transferred to the acceptor end of tRNA(Glu). The protein is Glutamate--tRNA ligase of Methanococcus maripaludis (strain C7 / ATCC BAA-1331).